The following is a 226-amino-acid chain: Urease accessory protein UreF (226 aa).

This sequence belongs to the UreF family. In terms of assembly, ureD, UreF and UreG form a complex that acts as a GTP-hydrolysis-dependent molecular chaperone, activating the urease apoprotein by helping to assemble the nickel containing metallocenter of UreC. The UreE protein probably delivers the nickel.

It is found in the cytoplasm. Its function is as follows. Required for maturation of urease via the functional incorporation of the urease nickel metallocenter. The polypeptide is Urease accessory protein UreF (Burkholderia lata (strain ATCC 17760 / DSM 23089 / LMG 22485 / NCIMB 9086 / R18194 / 383)).